A 125-amino-acid chain; its full sequence is Small ribosomal subunit protein uS12 (125 aa).

The segment at 1–24 (MPTISQLVRKPRKAKRTKSKVPAL) is disordered. Residues 9-19 (RKPRKAKRTKS) are compositionally biased toward basic residues. Residue Asp89 is modified to 3-methylthioaspartic acid. A disordered region spans residues 101–125 (SLDTAGVKDRKQARSKYGSKRPKSA). Residues 113 to 125 (ARSKYGSKRPKSA) show a composition bias toward basic residues.

It belongs to the universal ribosomal protein uS12 family. As to quaternary structure, part of the 30S ribosomal subunit. Contacts proteins S8 and S17. May interact with IF1 in the 30S initiation complex.

Its function is as follows. With S4 and S5 plays an important role in translational accuracy. In terms of biological role, interacts with and stabilizes bases of the 16S rRNA that are involved in tRNA selection in the A site and with the mRNA backbone. Located at the interface of the 30S and 50S subunits, it traverses the body of the 30S subunit contacting proteins on the other side and probably holding the rRNA structure together. The combined cluster of proteins S8, S12 and S17 appears to hold together the shoulder and platform of the 30S subunit. In Nitrosomonas europaea (strain ATCC 19718 / CIP 103999 / KCTC 2705 / NBRC 14298), this protein is Small ribosomal subunit protein uS12.